The sequence spans 354 residues: Ferrochelatase (354 aa).

2 residues coordinate Fe cation: H214 and E295.

The protein belongs to the ferrochelatase family.

Its subcellular location is the cytoplasm. It catalyses the reaction heme b + 2 H(+) = protoporphyrin IX + Fe(2+). The protein operates within porphyrin-containing compound metabolism; protoheme biosynthesis; protoheme from protoporphyrin-IX: step 1/1. In terms of biological role, catalyzes the ferrous insertion into protoporphyrin IX. In Burkholderia ambifaria (strain ATCC BAA-244 / DSM 16087 / CCUG 44356 / LMG 19182 / AMMD) (Burkholderia cepacia (strain AMMD)), this protein is Ferrochelatase.